We begin with the raw amino-acid sequence, 449 residues long: Cysteine--tRNA ligase (449 aa).

C30 provides a ligand contact to Zn(2+). The short motif at 32-42 (PTVYDRAHLGN) is the 'HIGH' region element. Residues C210, H235, and E239 each coordinate Zn(2+). A 'KMSKS' region motif is present at residues 268 to 272 (KMSKS). K271 serves as a coordination point for ATP.

It belongs to the class-I aminoacyl-tRNA synthetase family. In terms of assembly, monomer. The cofactor is Zn(2+).

It is found in the cytoplasm. The enzyme catalyses tRNA(Cys) + L-cysteine + ATP = L-cysteinyl-tRNA(Cys) + AMP + diphosphate. This chain is Cysteine--tRNA ligase, found in Acidiphilium cryptum (strain JF-5).